Reading from the N-terminus, the 126-residue chain is Histone H2B type 2-E (126 aa).

Positions 1–12 (MPEPAKSAPAPK) are enriched in low complexity. Residues 1-35 (MPEPAKSAPAPKKGSKKAVTKAQKKDGKKRKRSRK) are disordered. At P2 the chain carries N-acetylproline. ADP-ribosyl glutamic acid is present on E3. An N6-(2-hydroxyisobutyryl)lysine; alternate modification is found at K6. At K6 the chain carries N6-(beta-hydroxybutyryl)lysine; alternate. K6 carries the post-translational modification N6-acetyllysine; alternate. K6 carries the N6-butyryllysine; alternate modification. An N6-crotonyllysine; alternate modification is found at K6. The residue at position 6 (K6) is an N6-lactoyllysine; alternate. K6 participates in a covalent cross-link: Glycyl lysine isopeptide (Lys-Gly) (interchain with G-Cter in SUMO2); alternate. Residue S7 is modified to ADP-ribosylserine. N6-(beta-hydroxybutyryl)lysine; alternate is present on K12. 2 positions are modified to N6-acetyllysine; alternate: K12 and K13. 2 positions are modified to N6-crotonyllysine; alternate: K12 and K13. K12 carries the N6-lactoyllysine; alternate modification. K13 is modified (N6-(2-hydroxyisobutyryl)lysine; alternate). Residue S15 is modified to Phosphoserine; by STK4/MST1. N6-acetyllysine; alternate is present on residues K16, K17, K21, and K24. An N6-crotonyllysine; alternate mark is found at K16, K17, K21, and K24. K16, K17, K21, and K24 each carry N6-lactoyllysine; alternate. N6-(beta-hydroxybutyryl)lysine; alternate occurs at positions 17 and 21. The residue at position 17 (K17) is an N6-glutaryllysine; alternate. Residues K21 and K24 each carry the N6-(2-hydroxyisobutyryl)lysine; alternate modification. K21 carries the post-translational modification N6-butyryllysine; alternate. Residue K21 forms a Glycyl lysine isopeptide (Lys-Gly) (interchain with G-Cter in SUMO2); alternate linkage. An N6-(2-hydroxyisobutyryl)lysine modification is found at K25. K35 carries the N6-(2-hydroxyisobutyryl)lysine; alternate modification. The residue at position 35 (K35) is an N6-(beta-hydroxybutyryl)lysine; alternate. N6-crotonyllysine; alternate is present on K35. K35 is modified (N6-glutaryllysine; alternate). K35 is modified (N6-succinyllysine; alternate). K35 is covalently cross-linked (Glycyl lysine isopeptide (Lys-Gly) (interchain with G-Cter in ubiquitin); alternate). E36 is subject to PolyADP-ribosyl glutamic acid. Position 37 is a phosphoserine; by AMPK (S37). N6-(2-hydroxyisobutyryl)lysine; alternate occurs at positions 44, 47, and 58. At K44 the chain carries N6-lactoyllysine; alternate. N6-glutaryllysine; alternate occurs at positions 44 and 47. K47 carries the N6-methyllysine; alternate modification. An N6,N6-dimethyllysine; alternate modification is found at K58. The residue at position 80 (R80) is a Dimethylated arginine. At K86 the chain carries N6-(2-hydroxyisobutyryl)lysine; alternate. At K86 the chain carries N6-(beta-hydroxybutyryl)lysine; alternate. An N6-acetyllysine; alternate modification is found at K86. The residue at position 86 (K86) is an N6-lactoyllysine; alternate. N6,N6,N6-trimethyllysine; alternate is present on K86. R87 and R93 each carry omega-N-methylarginine. K109 is modified (N6-(2-hydroxyisobutyryl)lysine; alternate). Residue K109 is modified to N6-lactoyllysine; alternate. K109 is subject to N6-glutaryllysine; alternate. At K109 the chain carries N6-methyllysine; alternate. O-linked (GlcNAc) serine glycosylation is present at S113. T116 bears the Phosphothreonine mark. 2 positions are modified to N6-(2-hydroxyisobutyryl)lysine; alternate: K117 and K121. 2 positions are modified to N6-(beta-hydroxybutyryl)lysine; alternate: K117 and K121. 2 positions are modified to N6-lactoyllysine; alternate: K117 and K121. N6-glutaryllysine; alternate is present on residues K117 and K121. K117 and K121 each carry N6-succinyllysine; alternate. K117 is modified (N6-malonyllysine; alternate). At K117 the chain carries N6-methylated lysine; alternate. A Glycyl lysine isopeptide (Lys-Gly) (interchain with G-Cter in ubiquitin); alternate cross-link involves residue K121.

It belongs to the histone H2B family. In terms of assembly, the nucleosome is a histone octamer containing two molecules each of H2A, H2B, H3 and H4 assembled in one H3-H4 heterotetramer and two H2A-H2B heterodimers. The octamer wraps approximately 147 bp of DNA. Post-translationally, monoubiquitination at Lys-35 (H2BK34Ub) by the MSL1/MSL2 dimer is required for histone H3 'Lys-4' (H3K4me) and 'Lys-79' (H3K79me) methylation and transcription activation at specific gene loci, such as HOXA9 and MEIS1 loci. Similarly, monoubiquitination at Lys-121 (H2BK120Ub) by the RNF20/40 complex gives a specific tag for epigenetic transcriptional activation and is also prerequisite for histone H3 'Lys-4' and 'Lys-79' methylation. It also functions cooperatively with the FACT dimer to stimulate elongation by RNA polymerase II. H2BK120Ub also acts as a regulator of mRNA splicing: deubiquitination by USP49 is required for efficient cotranscriptional splicing of a large set of exons. Phosphorylation at Ser-37 (H2BS36ph) by AMPK in response to stress promotes transcription. Phosphorylated on Ser-15 (H2BS14ph) by STK4/MST1 during apoptosis; which facilitates apoptotic chromatin condensation. Also phosphorylated on Ser-15 in response to DNA double strand breaks (DSBs), and in correlation with somatic hypermutation and immunoglobulin class-switch recombination. In terms of processing, glcNAcylation at Ser-113 promotes monoubiquitination of Lys-121. It fluctuates in response to extracellular glucose, and associates with transcribed genes. Post-translationally, ADP-ribosylated by PARP1 or PARP2 on Ser-7 (H2BS6ADPr) in response to DNA damage. H2BS6ADPr promotes recruitment of CHD1L. Mono-ADP-ribosylated on Glu-3 (H2BE2ADPr) by PARP3 in response to single-strand breaks. Poly ADP-ribosylation on Glu-36 (H2BE35ADPr) by PARP1 regulates adipogenesis: it inhibits phosphorylation at Ser-37 (H2BS36ph), thereby blocking expression of pro-adipogenetic genes. Crotonylation (Kcr) is specifically present in male germ cells and marks testis-specific genes in post-meiotic cells, including X-linked genes that escape sex chromosome inactivation in haploid cells. Crotonylation marks active promoters and enhancers and confers resistance to transcriptional repressors. It is also associated with post-meiotically activated genes on autosomes. In terms of processing, lactylated in macrophages by EP300/P300 by using lactoyl-CoA directly derived from endogenous or exogenous lactate, leading to stimulates gene transcription.

Its subcellular location is the nucleus. It localises to the chromosome. Functionally, core component of nucleosome. Nucleosomes wrap and compact DNA into chromatin, limiting DNA accessibility to the cellular machineries which require DNA as a template. Histones thereby play a central role in transcription regulation, DNA repair, DNA replication and chromosomal stability. DNA accessibility is regulated via a complex set of post-translational modifications of histones, also called histone code, and nucleosome remodeling. Has broad antibacterial activity. May contribute to the formation of the functional antimicrobial barrier of the colonic epithelium, and to the bactericidal activity of amniotic fluid. This chain is Histone H2B type 2-E, found in Homo sapiens (Human).